The primary structure comprises 879 residues: Alanine--tRNA ligase (879 aa).

Zn(2+) contacts are provided by His-566, His-570, Cys-668, and His-672.

Belongs to the class-II aminoacyl-tRNA synthetase family. The cofactor is Zn(2+).

The protein localises to the cytoplasm. It carries out the reaction tRNA(Ala) + L-alanine + ATP = L-alanyl-tRNA(Ala) + AMP + diphosphate. In terms of biological role, catalyzes the attachment of alanine to tRNA(Ala) in a two-step reaction: alanine is first activated by ATP to form Ala-AMP and then transferred to the acceptor end of tRNA(Ala). Also edits incorrectly charged Ser-tRNA(Ala) and Gly-tRNA(Ala) via its editing domain. This Clostridium botulinum (strain Hall / ATCC 3502 / NCTC 13319 / Type A) protein is Alanine--tRNA ligase.